Consider the following 1966-residue polypeptide: Dedicator of cytokinesis protein 4 (1966 aa).

The SH3 domain occupies 6–67; the sequence is EHEKYGVVIA…PSSYVHLKNA (62 aa). Y167 carries the post-translational modification Phosphotyrosine. T193 bears the Phosphothreonine mark. One can recognise a C2 DOCK-type domain in the interval 401–574; sequence RNDLYITIER…ESFCITSFLC (174 aa). One can recognise a DOCKER domain in the interval 1190-1596; that stretch reads KTELNKEEMY…LGIQEFSACM (407 aa). S1599, S1607, S1614, S1618, S1620, and S1631 each carry phosphoserine. Disordered regions lie at residues 1648 to 1729 and 1742 to 1966; these read SQAS…IYPT and IGDG…VSQL. A compositionally biased stretch (low complexity) spans 1672-1703; sequence PSPSTSSLSSTHSASPNVTSSAPSSARASPLL. A Phosphoserine modification is found at S1769. Positions 1788–1794 match the SH3-binding motif; sequence PPVPPRP. Residues 1795–1809 show a composition bias toward polar residues; the sequence is TQTASPARHTTSVSP. Low complexity predominate over residues 1838-1863; sequence SNSPVLSGSYSSGISSLSRCSTSETS. A compositionally biased stretch (polar residues) spans 1864–1873; the sequence is GFENQVNEQS. The span at 1941 to 1954 shows a compositional bias: basic and acidic residues; sequence SHLENGARRTDPGP.

It belongs to the DOCK family. In terms of assembly, interacts with nucleotide-free Rap1; functions as a guanine nucleotide exchange factor (GEF) for Rap1. Interacts (via DOCKER domain) with RAC1; functions as a guanine nucleotide exchange factor (GEF) for RAC1. Interacts with the SH3 domain of CRK. Interacts with FASLG. Interacts with ELMO2 and EPHA2; mediates activation of RAC1 by EPHA2. Interacts with USH1C (via PDZ 1 domain). In terms of tissue distribution, widely expressed at low level. Highly expressed in skeletal muscle, prostate and ovary. As to expression, may be specifically expressed in the brain and eye.

It is found in the cell membrane. Its subcellular location is the cell projection. It localises to the cytoplasm. The protein resides in the cytosol. In terms of biological role, functions as a guanine nucleotide exchange factor (GEF) that promotes the exchange of GDP to GTP, converting inactive GDP-bound small GTPases into their active GTP-bound form. Involved in regulation of adherens junction between cells. Plays a role in cell migration. Its function is as follows. Has a higher guanine nucleotide exchange factor activity compared to other isoforms. This is Dedicator of cytokinesis protein 4 (DOCK4) from Homo sapiens (Human).